The sequence spans 489 residues: UBX domain-containing protein 7 (489 aa).

Ala2 is subject to N-acetylalanine. Residues 2–54 (AAHGGSAASSALKGLIQQFTTITGASESVGKHMLEACNNNLEMAVTMFLDGGG) form the UBA domain. Residues 56–77 (AEEPSTSSASVSTVRPHTEEEV) are disordered. Residues 59–70 (PSTSSASVSTVR) show a composition bias toward polar residues. Lys84 participates in a covalent cross-link: Glycyl lysine isopeptide (Lys-Gly) (interchain with G-Cter in SUMO2). Residue Lys99 forms a Glycyl lysine isopeptide (Lys-Gly) (interchain with G-Cter in ubiquitin) linkage. A Glycyl lysine isopeptide (Lys-Gly) (interchain with G-Cter in SUMO2) cross-link involves residue Lys134. 4 positions are modified to phosphoserine: Ser278, Ser280, Ser285, and Ser288. Residues 285–304 (SEDSQLEAAIRASLQETHFD) form the UIM domain. The segment covering 300–309 (ETHFDSTQTK) has biased composition (polar residues). The interval 300 to 384 (ETHFDSTQTK…PGTATNHQGL (85 aa)) is disordered. Position 306 is a phosphothreonine (Thr306). A compositionally biased stretch (basic and acidic residues) spans 352 to 366 (HKDLGHRKEENRRPL). One can recognise a UBX domain in the interval 408–485 (VNGPKAQLML…GLCPQETVFV (78 aa)).

In terms of assembly, interacts with neddylated CUL2, ubiquitinated HIF1A, and VCP/p97.

It localises to the nucleus. Its function is as follows. Ubiquitin-binding adapter that links a subset of NEDD8-associated cullin ring ligases (CRLs) to the segregase VCP/p97, to regulate turnover of their ubiquitination substrates. The chain is UBX domain-containing protein 7 (UBXN7) from Homo sapiens (Human).